Here is a 392-residue protein sequence, read N- to C-terminus: Succinate--CoA ligase [ADP-forming] subunit beta (392 aa).

The ATP-grasp domain maps to 9–247 (KEILRVCGVP…LYEEDPKEIE (239 aa)). ATP contacts are provided by residues Lys-49, 56-58 (GRG), Glu-102, Gln-105, and Glu-110. 2 residues coordinate Mg(2+): Asn-202 and Asp-216. Residues Asn-267 and 324 to 326 (GIM) each bind substrate.

The protein belongs to the succinate/malate CoA ligase beta subunit family. In terms of assembly, heterotetramer of two alpha and two beta subunits. Mg(2+) serves as cofactor.

It catalyses the reaction succinate + ATP + CoA = succinyl-CoA + ADP + phosphate. The catalysed reaction is GTP + succinate + CoA = succinyl-CoA + GDP + phosphate. The protein operates within carbohydrate metabolism; tricarboxylic acid cycle; succinate from succinyl-CoA (ligase route): step 1/1. In terms of biological role, succinyl-CoA synthetase functions in the citric acid cycle (TCA), coupling the hydrolysis of succinyl-CoA to the synthesis of either ATP or GTP and thus represents the only step of substrate-level phosphorylation in the TCA. The beta subunit provides nucleotide specificity of the enzyme and binds the substrate succinate, while the binding sites for coenzyme A and phosphate are found in the alpha subunit. The protein is Succinate--CoA ligase [ADP-forming] subunit beta of Neorickettsia sennetsu (strain ATCC VR-367 / Miyayama) (Ehrlichia sennetsu).